The chain runs to 338 residues: tRNA N6-adenosine threonylcarbamoyltransferase (338 aa).

2 residues coordinate Fe cation: H111 and H115. Substrate-binding positions include 134-138 (LLSGG), D167, G180, and N275. D304 lines the Fe cation pocket.

This sequence belongs to the KAE1 / TsaD family. Fe(2+) is required as a cofactor.

Its subcellular location is the cytoplasm. The catalysed reaction is L-threonylcarbamoyladenylate + adenosine(37) in tRNA = N(6)-L-threonylcarbamoyladenosine(37) in tRNA + AMP + H(+). Functionally, required for the formation of a threonylcarbamoyl group on adenosine at position 37 (t(6)A37) in tRNAs that read codons beginning with adenine. Is involved in the transfer of the threonylcarbamoyl moiety of threonylcarbamoyl-AMP (TC-AMP) to the N6 group of A37, together with TsaE and TsaB. TsaD likely plays a direct catalytic role in this reaction. The chain is tRNA N6-adenosine threonylcarbamoyltransferase from Leptospira interrogans serogroup Icterohaemorrhagiae serovar copenhageni (strain Fiocruz L1-130).